A 118-amino-acid chain; its full sequence is Small ribosomal subunit protein uS13 (118 aa).

Residues 94–118 form a disordered region; that stretch reads GLPLRGQRTKTNARTRKGRRKGTSS.

It belongs to the universal ribosomal protein uS13 family. As to quaternary structure, part of the 30S ribosomal subunit. Forms a loose heterodimer with protein S19. Forms two bridges to the 50S subunit in the 70S ribosome.

Functionally, located at the top of the head of the 30S subunit, it contacts several helices of the 16S rRNA. In the 70S ribosome it contacts the 23S rRNA (bridge B1a) and protein L5 of the 50S subunit (bridge B1b), connecting the 2 subunits; these bridges are implicated in subunit movement. Contacts the tRNAs in the A and P-sites. In Legionella pneumophila (strain Paris), this protein is Small ribosomal subunit protein uS13.